The sequence spans 443 residues: Protein FAM83A (443 aa).

Residues 311–403 form a disordered region; the sequence is DSGVSVMTDS…YYQRNYAPDS (93 aa). Over residues 315 to 326 the composition is skewed to polar residues; the sequence is SVMTDSTPESVN. Composition is skewed to low complexity over residues 327 to 344 and 388 to 399; these read TTSEPFSSTSTASISNDS and SNYQPNYYQRNY.

The protein belongs to the FAM83 family.

Its subcellular location is the cytoplasm. Its function is as follows. May function in the epidermal growth factor receptor/EGFR signaling pathway. This chain is Protein FAM83A, found in Xenopus laevis (African clawed frog).